We begin with the raw amino-acid sequence, 341 residues long: Geranylgeranyl pyrophosphate synthase penG (341 aa).

Positions 68, 71, and 100 each coordinate isopentenyl diphosphate. Positions 107 and 111 each coordinate Mg(2+). Position 116 (Arg116) interacts with dimethylallyl diphosphate. Arg117 provides a ligand contact to isopentenyl diphosphate. Residues Lys194, Thr195, and Gln228 each contribute to the dimethylallyl diphosphate site. Asp231 is a binding site for Mg(2+). Residues Asn235, Lys245, and Lys255 each contribute to the dimethylallyl diphosphate site.

It belongs to the FPP/GGPP synthase family. Requires Mg(2+) as cofactor.

The enzyme catalyses isopentenyl diphosphate + dimethylallyl diphosphate = (2E)-geranyl diphosphate + diphosphate. It catalyses the reaction isopentenyl diphosphate + (2E)-geranyl diphosphate = (2E,6E)-farnesyl diphosphate + diphosphate. The catalysed reaction is isopentenyl diphosphate + (2E,6E)-farnesyl diphosphate = (2E,6E,10E)-geranylgeranyl diphosphate + diphosphate. Its pathway is secondary metabolite biosynthesis. Functionally, geranylgeranyl pyrophosphate synthase; part of the gene cluster that mediates the biosynthesis of the indole diterpenes penitrems. The geranylgeranyl diphosphate (GGPP) synthase penG catalyzes the first step in penitrem biosynthesis via conversion of farnesyl pyrophosphate and isopentyl pyrophosphate into geranylgeranyl pyrophosphate (GGPP). Condensation of indole-3-glycerol phosphate with GGPP by the prenyl transferase penC then forms 3-geranylgeranylindole (3-GGI). Epoxidation by the FAD-dependent monooxygenase penM leads to a epoxidized-GGI that is substrate of the terpene cyclase penB for cyclization to yield paspaline. Paspaline is subsequently converted to 13-desoxypaxilline by the cytochrome P450 monooxygenase penP, the latter being then converted to paxilline by the cytochrome P450 monooxygenase penQ. Paxilline is converted to beta-paxitriol via C-10 ketoreduction by the short-chain dehydrogenase PC-15 which can be monoprenylated at the C-20 by the indole diterpene prenyltransferase penD. A two-step elimination (acetylation and elimination) process performed by the O-acetyltransferase PC-16 and the P.simplicissimum ptmI-ortholog not yet identified in P.crustosum, leads to the production of the prenylated form of penijanthine. The FAD-linked oxidoreductase ptmO then converts the prenylated form of penijanthine into PC-M5 which is in turn transformed into PC-M4 by the aromatic dimethylallyltransferase PC-22. A series of oxidation steps involving 4 cytochrome P450 monooxygenases (PC-21, PC-05, PC-23, PC-20) and a FAD-dependent monooxygenase (PC-14) are required for the transformation of PC-M4 to penitrems A and E. Synthesis of these final products is proposed to proceed via penitrems D and C (PC-21, PC-05, PC-14) and penitrems B and F (PC-21, PC-05, PC-14, PC-23). The polypeptide is Geranylgeranyl pyrophosphate synthase penG (Penicillium crustosum (Blue mold fungus)).